Consider the following 247-residue polypeptide: MTILFLTMVISYFGCMKAAPMKEANVRGQGSLAYPGVRTHGTLESVNGPKAGSRGLTSLADTFEHVIEELLDEDQKVRPSEENNKDADLYTSRVMLSSQVPLEPPLLFLLEEYKNYLDAANMSMRVRRHSDPTRRGELSVCDSISEWVTAADKKTAVDMSGGTVTVLEKVPVSKGQLKQYFYETKCNPMGYTKEGCRGIDKRHWNSQCRTTQSYVRALTMDSKKRIGWRFIRIDTSCVCTLTIKRGR.

A signal peptide spans 1–18 (MTILFLTMVISYFGCMKA). Positions 19-128 (APMKEANVRG…AANMSMRVRR (110 aa)) are excised as a propeptide. An N-linked (GlcNAc...) asparagine glycan is attached at Asn-121. 3 disulfides stabilise this stretch: Cys-141/Cys-208, Cys-186/Cys-237, and Cys-196/Cys-239.

Belongs to the NGF-beta family. In terms of assembly, monomers and homodimers. Binds to NTRK2/TRKB. Can form heterodimers with other neurotrophin family members, such as NTF3 and NTF4 (in vitro), but the physiological relevance of this is not clear. BDNF precursor form: interacts with the heterodimer formed by NGFR and SORCS2. Mature BDNF has much lower affinity for the heterodimer formed by NGFR and SORCS2. N-glycosylated and glycosulfated, contrary to mature BDNF. Post-translationally, mature BDNF is produced by proteolytic removal of the propeptide, catalyzed by a FURIN family member. In addition, the precursor form is proteolytically cleaved within the propeptide, but this is not an obligatory intermediate for the production of mature BDNF. Can be converted into mature BDNF by plasmin (PLG).

It localises to the secreted. In terms of biological role, important signaling molecule that activates signaling cascades downstream of NTRK2. During development, promotes the survival and differentiation of selected neuronal populations of the peripheral and central nervous systems. Participates in axonal growth, pathfinding and in the modulation of dendritic growth and morphology. Major regulator of synaptic transmission and plasticity at adult synapses in many regions of the CNS. The versatility of BDNF is emphasized by its contribution to a range of adaptive neuronal responses including long-term potentiation (LTP), long-term depression (LTD), certain forms of short-term synaptic plasticity, as well as homeostatic regulation of intrinsic neuronal excitability. Functionally, important signaling molecule that activates signaling cascades downstream of NTRK2. Activates signaling cascades via the heterodimeric receptor formed by NGFR and SORCS2. Signaling via NGFR and SORCS2 plays a role in synaptic plasticity and long-term depression (LTD). Binding to NGFR and SORCS2 promotes neuronal apoptosis. Promotes neuronal growth cone collapse. This Ursus arctos (Brown bear) protein is Neurotrophic factor BDNF precursor form (BDNF).